The primary structure comprises 323 residues: MSFFVNRIWYGNHFLQWILVPFSWLYRIVIRTRRWYLQRFCQQLYPIPIIVVGNVTVGGVGKTPLVIEIAKKIQQKGLKVGIVSRGYKAAIKHFPYEVKLNDSAELVGDEPLMMARKINCPVVIAPKRNEAVRYLLDKHSVEIIISDDGLQHYKMGRSIEIVVIDGMRKLGNGFCLPAGPLREPDSRLKQVDFVIVNQGAAEGTYSMELIPKNIVRLSTQEEVSNDLFTSEVAAVAGIGNPQRFYSTLSQLGIKFNPYSYPDHHQFKPHDLNDIDLPVIMTEKDAVKCYSFSSDKLYYLPVEAKLNDSFWEAFWSHQQLQGYY.

56-63 is a binding site for ATP; the sequence is TVGGVGKT.

Belongs to the LpxK family.

It carries out the reaction a lipid A disaccharide + ATP = a lipid IVA + ADP + H(+). It functions in the pathway glycolipid biosynthesis; lipid IV(A) biosynthesis; lipid IV(A) from (3R)-3-hydroxytetradecanoyl-[acyl-carrier-protein] and UDP-N-acetyl-alpha-D-glucosamine: step 6/6. In terms of biological role, transfers the gamma-phosphate of ATP to the 4'-position of a tetraacyldisaccharide 1-phosphate intermediate (termed DS-1-P) to form tetraacyldisaccharide 1,4'-bis-phosphate (lipid IVA). This is Tetraacyldisaccharide 4'-kinase from Legionella pneumophila (strain Corby).